Consider the following 31-residue polypeptide: Potassium channel toxin alpha-KTx 19.2 (31 aa).

Cystine bridges form between cysteine 3/cysteine 22, cysteine 8/cysteine 27, and cysteine 12/cysteine 29.

Belongs to the short scorpion toxin superfamily. Potassium channel inhibitor family. Alpha-KTx 19 subfamily. Monomer. In terms of tissue distribution, expressed by the venom gland.

The protein resides in the secreted. In terms of biological role, blocks voltage-gated potassium channels rKv1.1/KCNA1, rKv1.2/KCNA2, hKv1.3/KCNA3, rKv1.6/KCNA6 (IC(50)=75.9 nM) and, to a lesser extent, Shaker IR (with the inactivation domain removed). This Buthus occitanus tunetanus (Common European scorpion) protein is Potassium channel toxin alpha-KTx 19.2.